The primary structure comprises 475 residues: Histidine--tRNA ligase (475 aa).

This sequence belongs to the class-II aminoacyl-tRNA synthetase family. As to quaternary structure, homodimer.

Its subcellular location is the cytoplasm. It carries out the reaction tRNA(His) + L-histidine + ATP = L-histidyl-tRNA(His) + AMP + diphosphate + H(+). This Flavobacterium johnsoniae (strain ATCC 17061 / DSM 2064 / JCM 8514 / BCRC 14874 / CCUG 350202 / NBRC 14942 / NCIMB 11054 / UW101) (Cytophaga johnsonae) protein is Histidine--tRNA ligase.